A 387-amino-acid chain; its full sequence is 3-ketoacyl-CoA thiolase (387 aa).

Catalysis depends on cysteine 91, which acts as the Acyl-thioester intermediate. Active-site proton acceptor residues include histidine 343 and cysteine 373.

The protein belongs to the thiolase-like superfamily. Thiolase family. In terms of assembly, heterotetramer of two alpha chains (FadB) and two beta chains (FadA).

The protein resides in the cytoplasm. The enzyme catalyses an acyl-CoA + acetyl-CoA = a 3-oxoacyl-CoA + CoA. It participates in lipid metabolism; fatty acid beta-oxidation. Functionally, catalyzes the final step of fatty acid oxidation in which acetyl-CoA is released and the CoA ester of a fatty acid two carbons shorter is formed. This is 3-ketoacyl-CoA thiolase from Aeromonas hydrophila subsp. hydrophila (strain ATCC 7966 / DSM 30187 / BCRC 13018 / CCUG 14551 / JCM 1027 / KCTC 2358 / NCIMB 9240 / NCTC 8049).